Consider the following 212-residue polypeptide: Lipopolysaccharide core heptose(II)-phosphate phosphatase (212 aa).

The N-terminal stretch at 1 to 32 (MSIGGVYELAFCRSSLKSKKYFIILLALAAIA) is a signal peptide.

It belongs to the phosphoglycerate mutase family. Ais subfamily.

It is found in the periplasm. Its pathway is bacterial outer membrane biogenesis; lipopolysaccharide metabolism. Functionally, catalyzes the dephosphorylation of heptose(II) of the outer membrane lipopolysaccharide core. The sequence is that of Lipopolysaccharide core heptose(II)-phosphate phosphatase from Shigella boydii serotype 4 (strain Sb227).